Here is a 265-residue protein sequence, read N- to C-terminus: GTP cyclohydrolase 1 type 2 homolog (265 aa).

A divalent metal cation is bound by residues His65, Asp103, His225, and Glu228.

This sequence belongs to the GTP cyclohydrolase I type 2/NIF3 family. In terms of assembly, homohexamer.

The sequence is that of GTP cyclohydrolase 1 type 2 homolog from Streptococcus pneumoniae serotype 4 (strain ATCC BAA-334 / TIGR4).